We begin with the raw amino-acid sequence, 295 residues long: UTP--glucose-1-phosphate uridylyltransferase (295 aa).

This sequence belongs to the UDPGP type 2 family.

The catalysed reaction is alpha-D-glucose 1-phosphate + UTP + H(+) = UDP-alpha-D-glucose + diphosphate. Functionally, may play a role in stationary phase survival. The polypeptide is UTP--glucose-1-phosphate uridylyltransferase (galU) (Haemophilus ducreyi (strain 35000HP / ATCC 700724)).